The following is a 238-amino-acid chain: Putative pectate lyase X (238 aa).

An N-terminal signal peptide occupies residues 1–22 (MKYLLPTAAAGLLLLAAQPAMA). Ca(2+) is bound by residues aspartate 153, glutamate 188, and aspartate 192.

This sequence belongs to the polysaccharide lyase 1 family. Ca(2+) serves as cofactor.

It carries out the reaction Eliminative cleavage of (1-&gt;4)-alpha-D-galacturonan to give oligosaccharides with 4-deoxy-alpha-D-galact-4-enuronosyl groups at their non-reducing ends.. It participates in glycan metabolism; pectin degradation; 2-dehydro-3-deoxy-D-gluconate from pectin: step 2/5. Involved in maceration and soft-rotting of plant tissue. The protein is Putative pectate lyase X (PEL X) of Pectobacterium carotovorum (Erwinia carotovora).